Consider the following 414-residue polypeptide: MDEKQPLTPEQQKLVDEQVEALMRGVVEVVPKEAFREKIEKSVRTGKPLNIKLGMDPSAPDVHIGHTVVLQKLRQFQEYGHHIQLLIGDFTGKIGDPTGKSETRKVLTDEQVKQNAQTYVEQYGKILDIEKTEILYNSRWLSELKFDDVLKLAGQMTVARMLEREDFSKRYKTGQPISVHEFFYPLMQGYDSVAMETDIEVGGTDQTFNLLMGRQLQEAYGKEKQVMLTLPLIEGLDGVRKMSKSLNNYIGIDEAPNEIFGKAMSIPDELMVKYYKLATDVPMDEIEALEKGLADGSVHPRDAKMRLGHKFVEMYHGKEAADEAEQYFKTVFQKRALPEDIPVFSWEGDKEVPLIDLLVTLNMQSSKGEARRMIQGGGVKINEQKITDIHTVVSVEDNMIVQVGKRKFAKLSLT.

The short motif at 57–66 (PSAPDVHIGH) is the 'HIGH' region element. The 'KMSKS' region signature appears at 241 to 245 (KMSKS). K244 provides a ligand contact to ATP. Residues 352–413 (VPLIDLLVTL…GKRKFAKLSL (62 aa)) form the S4 RNA-binding domain.

This sequence belongs to the class-I aminoacyl-tRNA synthetase family. TyrS type 2 subfamily. As to quaternary structure, homodimer.

The protein localises to the cytoplasm. The enzyme catalyses tRNA(Tyr) + L-tyrosine + ATP = L-tyrosyl-tRNA(Tyr) + AMP + diphosphate + H(+). Functionally, catalyzes the attachment of tyrosine to tRNA(Tyr) in a two-step reaction: tyrosine is first activated by ATP to form Tyr-AMP and then transferred to the acceptor end of tRNA(Tyr). The chain is Tyrosine--tRNA ligase from Shouchella clausii (strain KSM-K16) (Alkalihalobacillus clausii).